A 303-amino-acid polypeptide reads, in one-letter code: Putative fimbrium subunit Fim1C (303 aa).

A signal peptide spans 1–22 (MKKQALICALLATVLLPGCSED).

This sequence belongs to the bacteroidetes fimbrillin superfamily. Mfa-like family. May be part of the fimbrial tip.

The protein resides in the fimbrium. Its function is as follows. Putative component of the fimbrium tip. Fimbriae are filamentous appendages on the cell surface that mediate cell adhesion and biofilm formation. The chain is Putative fimbrium subunit Fim1C (fim1C) from Bacteroides uniformis (strain ATCC 8492 / DSM 6597 / CCUG 4942 / CIP 103695 / JCM 5828 / KCTC 5204 / NCTC 13054 / VPI 0061).